A 153-amino-acid chain; its full sequence is Ribosome maturation factor RimP (153 aa).

This sequence belongs to the RimP family.

It localises to the cytoplasm. Functionally, required for maturation of 30S ribosomal subunits. The polypeptide is Ribosome maturation factor RimP (Coxiella burnetii (strain CbuK_Q154) (Coxiella burnetii (strain Q154))).